The chain runs to 1097 residues: DNA-directed RNA polymerase subunit beta (1097 aa).

The disordered stretch occupies residues 1073 to 1097 (DVNPRRSTPSRPTYESLGVADYDED).

This sequence belongs to the RNA polymerase beta chain family. In cyanobacteria the RNAP catalytic core is composed of 2 alpha, 1 beta, 1 beta', 1 gamma and 1 omega subunit. When a sigma factor is associated with the core the holoenzyme is formed, which can initiate transcription.

It catalyses the reaction RNA(n) + a ribonucleoside 5'-triphosphate = RNA(n+1) + diphosphate. Its function is as follows. DNA-dependent RNA polymerase catalyzes the transcription of DNA into RNA using the four ribonucleoside triphosphates as substrates. This is DNA-directed RNA polymerase subunit beta from Synechococcus sp. (strain RCC307).